Consider the following 789-residue polypeptide: Ataxin-1 (789 aa).

Over residues 1–30 (MKSNQERSNECLPPKKREIPATSRPSEEKA) the composition is skewed to basic and acidic residues. Residues 1–73 (MKSNQERSNE…GTSGEHGLQG (73 aa)) are disordered. K16 is covalently cross-linked (Glycyl lysine isopeptide (Lys-Gly) (interchain with G-Cter in SUMO)). Phosphoserine occurs at positions 81 and 87. 2 disordered regions span residues 188 to 237 (QAPG…RATS) and 296 to 397 (EVLN…KPGH). K193 participates in a covalent cross-link: Glycyl lysine isopeptide (Lys-Gly) (interchain with G-Cter in SUMO). S213 carries the phosphoserine modification. A Phosphothreonine modification is found at T217. Composition is skewed to polar residues over residues 218-235 (QQNQ…SGRA), 310-325 (ASSS…SSKS), and 360-386 (PNSS…TLND). A Phosphoserine modification is found at S228. The interval 468–578 (VGSPDMDTPG…TEDFIQSAEI (111 aa)) is self-association. An interaction with USP7 region spans residues 512–789 (LVTQAAYPAM…CIEGRSNVGK (278 aa)). Positions 514–740 (TQAAYPAMVQ…FLTKIEPSKP (227 aa)) are RNA-binding. The 132-residue stretch at 536-667 (SPAAASPTLP…SLTLKNLKNG (132 aa)) folds into the AXH domain. Residues K583, K670, and K719 each participate in a glycyl lysine isopeptide (Lys-Gly) (interchain with G-Cter in SUMO) cross-link. The tract at residues 736–772 (EPSKPTATRKRRWSAPETRKLEKSEDEPPLTLPKPSL) is disordered. The residue at position 749 (S749) is a Phosphoserine. The short motif at 768 to 771 (PKPS) is the Nuclear localization signal element.

Belongs to the ATXN1 family. In terms of assembly, homooligomer. Interacts with CIC. Interacts with ANP32A, PQBP1, UBQLN4, ATXN1L and USP7. Directly interacts with RBPJ; this interaction is disrupted in the presence of Notch intracellular domain. Competes with ATXN1L for RBPJ-binding. Found in a complex with CIC and ATXN1L. In terms of processing, ubiquitinated by UBE3A, leading to its degradation by the proteasome. Phosphorylation at Ser-749 increases the pathogenicity of proteins with an expanded polyglutamine tract. Post-translationally, sumoylation is dependent on nuclear localization and phosphorylation at Ser-749. It is reduced in the presence of an expanded polyglutamine tract.

It is found in the cytoplasm. Its subcellular location is the nucleus. In terms of biological role, chromatin-binding factor that repress Notch signaling in the absence of Notch intracellular domain by acting as a CBF1 corepressor. Binds to the HEY promoter and might assist, along with NCOR2, RBPJ-mediated repression. Binds RNA in vitro. May be involved in RNA metabolism. In concert with CIC and ATXN1L, involved brain development. This chain is Ataxin-1 (Atxn1), found in Rattus norvegicus (Rat).